Consider the following 415-residue polypeptide: Branched-chain-amino-acid aminotransferase, cytosolic (415 aa).

Position 244 is an N6-(pyridoxal phosphate)lysine (lysine 244).

Belongs to the class-IV pyridoxal-phosphate-dependent aminotransferase family. It depends on pyridoxal 5'-phosphate as a cofactor.

Its subcellular location is the cytoplasm. The catalysed reaction is L-leucine + 2-oxoglutarate = 4-methyl-2-oxopentanoate + L-glutamate. It catalyses the reaction L-isoleucine + 2-oxoglutarate = (S)-3-methyl-2-oxopentanoate + L-glutamate. It carries out the reaction L-valine + 2-oxoglutarate = 3-methyl-2-oxobutanoate + L-glutamate. In terms of biological role, catalyzes the first reaction in the catabolism of the essential branched chain amino acids leucine, isoleucine, and valine. The polypeptide is Branched-chain-amino-acid aminotransferase, cytosolic (bcat-1) (Caenorhabditis elegans).